We begin with the raw amino-acid sequence, 449 residues long: Glucose-6-phosphate isomerase (449 aa).

Glu-291 serves as the catalytic Proton donor. Residues His-312 and Lys-426 contribute to the active site.

Belongs to the GPI family.

The protein localises to the cytoplasm. It carries out the reaction alpha-D-glucose 6-phosphate = beta-D-fructose 6-phosphate. The protein operates within carbohydrate biosynthesis; gluconeogenesis. It functions in the pathway carbohydrate degradation; glycolysis; D-glyceraldehyde 3-phosphate and glycerone phosphate from D-glucose: step 2/4. In terms of biological role, catalyzes the reversible isomerization of glucose-6-phosphate to fructose-6-phosphate. This chain is Glucose-6-phosphate isomerase, found in Streptococcus gordonii (strain Challis / ATCC 35105 / BCRC 15272 / CH1 / DL1 / V288).